The following is a 101-amino-acid chain: NADH-quinone oxidoreductase subunit K (101 aa).

3 consecutive transmembrane segments (helical) span residues 4 to 24 (LSHFLVLGGVLFAIAVLGIFL), 30 to 50 (IVLLMAIELMLLAVNMNFIAF), and 61 to 81 (VFVFFILTVAAAESAIGLAIL).

This sequence belongs to the complex I subunit 4L family. As to quaternary structure, NDH-1 is composed of 14 different subunits. Subunits NuoA, H, J, K, L, M, N constitute the membrane sector of the complex.

The protein localises to the cell inner membrane. The enzyme catalyses a quinone + NADH + 5 H(+)(in) = a quinol + NAD(+) + 4 H(+)(out). NDH-1 shuttles electrons from NADH, via FMN and iron-sulfur (Fe-S) centers, to quinones in the respiratory chain. The immediate electron acceptor for the enzyme in this species is believed to be ubiquinone. Couples the redox reaction to proton translocation (for every two electrons transferred, four hydrogen ions are translocated across the cytoplasmic membrane), and thus conserves the redox energy in a proton gradient. In Thiobacillus denitrificans (strain ATCC 25259 / T1), this protein is NADH-quinone oxidoreductase subunit K.